We begin with the raw amino-acid sequence, 406 residues long: Succinylornithine transaminase (406 aa).

Residue Lys252 is modified to N6-(pyridoxal phosphate)lysine.

The protein belongs to the class-III pyridoxal-phosphate-dependent aminotransferase family. AstC subfamily. It depends on pyridoxal 5'-phosphate as a cofactor.

It catalyses the reaction N(2)-succinyl-L-ornithine + 2-oxoglutarate = N-succinyl-L-glutamate 5-semialdehyde + L-glutamate. Its pathway is amino-acid degradation; L-arginine degradation via AST pathway; L-glutamate and succinate from L-arginine: step 3/5. Its function is as follows. Catalyzes the transamination of N(2)-succinylornithine and alpha-ketoglutarate into N(2)-succinylglutamate semialdehyde and glutamate. Can also act as an acetylornithine aminotransferase. This chain is Succinylornithine transaminase, found in Escherichia coli O139:H28 (strain E24377A / ETEC).